Consider the following 152-residue polypeptide: Arginine repressor (152 aa).

This sequence belongs to the ArgR family.

It is found in the cytoplasm. It functions in the pathway amino-acid biosynthesis; L-arginine biosynthesis [regulation]. Functionally, regulates arginine biosynthesis genes. The protein is Arginine repressor of Lachnoclostridium phytofermentans (strain ATCC 700394 / DSM 18823 / ISDg) (Clostridium phytofermentans).